We begin with the raw amino-acid sequence, 223 residues long: Phosphoribosylformylglycinamidine synthase subunit PurQ (223 aa).

The Glutamine amidotransferase type-1 domain occupies 2–223 (KIAVVVFPGS…KSLLKAGVQA (222 aa)). Cysteine 86 serves as the catalytic Nucleophile. Active-site residues include histidine 195 and glutamate 197.

In terms of assembly, part of the FGAM synthase complex composed of 1 PurL, 1 PurQ and 2 PurS subunits.

It is found in the cytoplasm. It carries out the reaction N(2)-formyl-N(1)-(5-phospho-beta-D-ribosyl)glycinamide + L-glutamine + ATP + H2O = 2-formamido-N(1)-(5-O-phospho-beta-D-ribosyl)acetamidine + L-glutamate + ADP + phosphate + H(+). The enzyme catalyses L-glutamine + H2O = L-glutamate + NH4(+). It participates in purine metabolism; IMP biosynthesis via de novo pathway; 5-amino-1-(5-phospho-D-ribosyl)imidazole from N(2)-formyl-N(1)-(5-phospho-D-ribosyl)glycinamide: step 1/2. In terms of biological role, part of the phosphoribosylformylglycinamidine synthase complex involved in the purines biosynthetic pathway. Catalyzes the ATP-dependent conversion of formylglycinamide ribonucleotide (FGAR) and glutamine to yield formylglycinamidine ribonucleotide (FGAM) and glutamate. The FGAM synthase complex is composed of three subunits. PurQ produces an ammonia molecule by converting glutamine to glutamate. PurL transfers the ammonia molecule to FGAR to form FGAM in an ATP-dependent manner. PurS interacts with PurQ and PurL and is thought to assist in the transfer of the ammonia molecule from PurQ to PurL. This is Phosphoribosylformylglycinamidine synthase subunit PurQ from Lactobacillus acidophilus (strain ATCC 700396 / NCK56 / N2 / NCFM).